The primary structure comprises 351 residues: Maleylacetate reductase (351 aa).

The protein belongs to the iron-containing alcohol dehydrogenase family. Homodimer.

It catalyses the reaction 3-oxoadipate + NAD(+) = maleylacetate + NADH + H(+). The protein operates within aromatic compound metabolism. Functionally, involved in the gamma-resorcylate (2,6-dihydroxybenzoate) catabolism. Catalyzes the reduction of maleylacetate to 3-oxoadipate. The polypeptide is Maleylacetate reductase (Rhizobium sp. (strain MTP-10005)).